A 109-amino-acid polypeptide reads, in one-letter code: Putative transposase MJ0856.1 (109 aa).

C36, C39, C62, and C65 together coordinate Zn(2+).

This sequence belongs to the transposase 35 family.

The sequence is that of Putative transposase MJ0856.1 from Methanocaldococcus jannaschii (strain ATCC 43067 / DSM 2661 / JAL-1 / JCM 10045 / NBRC 100440) (Methanococcus jannaschii).